The sequence spans 312 residues: Pimeloyl-[acyl-carrier protein] methyl ester esterase (312 aa).

One can recognise an AB hydrolase-1 domain in the interval 17–241 (VYLIHGWGAN…KAAHAPFLSH (225 aa)). Substrate contacts are provided by residues W23, 83-84 (SL), and 145-149 (FLQLQ). S83 (nucleophile) is an active-site residue. Residues D207 and H235 contribute to the active site. H235 is a substrate binding site.

The protein belongs to the AB hydrolase superfamily. Carboxylesterase BioH family. As to quaternary structure, monomer.

Its subcellular location is the cytoplasm. The catalysed reaction is 6-carboxyhexanoyl-[ACP] methyl ester + H2O = 6-carboxyhexanoyl-[ACP] + methanol + H(+). It participates in cofactor biosynthesis; biotin biosynthesis. Functionally, the physiological role of BioH is to remove the methyl group introduced by BioC when the pimeloyl moiety is complete. It allows to synthesize pimeloyl-ACP via the fatty acid synthetic pathway through the hydrolysis of the ester bonds of pimeloyl-ACP esters. The chain is Pimeloyl-[acyl-carrier protein] methyl ester esterase from Neisseria meningitidis serogroup A / serotype 4A (strain DSM 15465 / Z2491).